A 176-amino-acid polypeptide reads, in one-letter code: Peptidoglycan-associated lipoprotein (176 aa).

The signal sequence occupies residues 1–32 (MSRIDTPAASRMQTIARNPVMIALVMTLALAG). The N-palmitoyl cysteine moiety is linked to residue Cys-33. Cys-33 carries the S-diacylglycerol cysteine lipid modification. The 118-residue stretch at 58–175 (QQDFTVNVGD…RAVTVLGGAG (118 aa)) folds into the OmpA-like domain.

This sequence belongs to the Pal lipoprotein family. In terms of assembly, the Tol-Pal system is composed of five core proteins: the inner membrane proteins TolA, TolQ and TolR, the periplasmic protein TolB and the outer membrane protein Pal. They form a network linking the inner and outer membranes and the peptidoglycan layer.

It is found in the cell outer membrane. Functionally, part of the Tol-Pal system, which plays a role in outer membrane invagination during cell division and is important for maintaining outer membrane integrity. This chain is Peptidoglycan-associated lipoprotein, found in Rhizobium meliloti (strain 1021) (Ensifer meliloti).